Here is an 879-residue protein sequence, read N- to C-terminus: RNA-directed RNA polymerase (879 aa).

259–266 (GLPYVGRT) is a binding site for GTP. The 201-residue stretch at 398–598 (LVYADNIYIV…DKERLFCSAA (201 aa)) folds into the RdRp catalytic domain. The interval 846-879 (GAGTSRPMGMEAPTRSKNAVKMAKRRQRQKESRQ) is disordered.

As to quaternary structure, interacts with VP3 in the cytoplasm. May exist in multiple phosphorylated forms.

Its subcellular location is the virion. It catalyses the reaction RNA(n) + a ribonucleoside 5'-triphosphate = RNA(n+1) + diphosphate. Its function is as follows. RNA-dependent RNA polymerase which is found both free and covalently attached to the genomic RNA. May also contain guanylyl and methyl transferase activities. This chain is RNA-directed RNA polymerase (VP1), found in Gallus gallus (Chicken).